Consider the following 293-residue polypeptide: 4-diphosphocytidyl-2-C-methyl-D-erythritol kinase (293 aa).

The active site involves lysine 10. 96-106 (PVASGIGGGSS) contacts ATP. Aspartate 138 is a catalytic residue.

It belongs to the GHMP kinase family. IspE subfamily.

It catalyses the reaction 4-CDP-2-C-methyl-D-erythritol + ATP = 4-CDP-2-C-methyl-D-erythritol 2-phosphate + ADP + H(+). The protein operates within isoprenoid biosynthesis; isopentenyl diphosphate biosynthesis via DXP pathway; isopentenyl diphosphate from 1-deoxy-D-xylulose 5-phosphate: step 3/6. Functionally, catalyzes the phosphorylation of the position 2 hydroxy group of 4-diphosphocytidyl-2C-methyl-D-erythritol. This chain is 4-diphosphocytidyl-2-C-methyl-D-erythritol kinase, found in Chelativorans sp. (strain BNC1).